The chain runs to 191 residues: Early nodulin-like protein 8 (191 aa).

A signal peptide spans Met1–Gly22. Residues Thr31 to Thr133 form the Phytocyanin domain. Cysteines 87 and 121 form a disulfide. N-linked (GlcNAc...) asparagine glycans are attached at residues Asn104 and Asn108. The GPI-anchor amidated serine moiety is linked to residue Ser165. Positions Ser166–Met191 are cleaved as a propeptide — removed in mature form.

Belongs to the early nodulin-like (ENODL) family. In terms of tissue distribution, mostly expressed in seedlings and roots, and, to a lower extent, in leaves, flowers, stems and seeds.

The protein resides in the cell membrane. May act as a carbohydrate transporter. This is Early nodulin-like protein 8 from Arabidopsis thaliana (Mouse-ear cress).